Here is a 331-residue protein sequence, read N- to C-terminus: Tetraacyldisaccharide 4'-kinase (331 aa).

60 to 67 contributes to the ATP binding site; the sequence is TIGGTGKT.

The protein belongs to the LpxK family.

It catalyses the reaction a lipid A disaccharide + ATP = a lipid IVA + ADP + H(+). It functions in the pathway glycolipid biosynthesis; lipid IV(A) biosynthesis; lipid IV(A) from (3R)-3-hydroxytetradecanoyl-[acyl-carrier-protein] and UDP-N-acetyl-alpha-D-glucosamine: step 6/6. In terms of biological role, transfers the gamma-phosphate of ATP to the 4'-position of a tetraacyldisaccharide 1-phosphate intermediate (termed DS-1-P) to form tetraacyldisaccharide 1,4'-bis-phosphate (lipid IVA). This is Tetraacyldisaccharide 4'-kinase from Pseudomonas syringae pv. tomato (strain ATCC BAA-871 / DC3000).